The chain runs to 227 residues: Cytochrome c oxidase subunit 2 (227 aa).

At 1 to 14 (MAYPFQLGLQDATS) the chain is on the mitochondrial intermembrane side. Residues 15 to 45 (PIMEELLHFHDHTLMIVFLISSLVLYIISLM) traverse the membrane as a helical segment. The Mitochondrial matrix portion of the chain corresponds to 46–59 (LTTKLTHTSTMDAQ). Residues 60–87 (EVETVWTILPAIILILIALPSLRILYMM) form a helical membrane-spanning segment. At 88–227 (DEINNPSLTV…YFETWSAVMV (140 aa)) the chain is on the mitochondrial intermembrane side. Cu cation is bound by residues His-161, Cys-196, Glu-198, Cys-200, His-204, and Met-207. Mg(2+) is bound at residue Glu-198. A Phosphotyrosine modification is found at Tyr-218.

Belongs to the cytochrome c oxidase subunit 2 family. Component of the cytochrome c oxidase (complex IV, CIV), a multisubunit enzyme composed of 14 subunits. The complex is composed of a catalytic core of 3 subunits MT-CO1, MT-CO2 and MT-CO3, encoded in the mitochondrial DNA, and 11 supernumerary subunits COX4I, COX5A, COX5B, COX6A, COX6B, COX6C, COX7A, COX7B, COX7C, COX8 and NDUFA4, which are encoded in the nuclear genome. The complex exists as a monomer or a dimer and forms supercomplexes (SCs) in the inner mitochondrial membrane with NADH-ubiquinone oxidoreductase (complex I, CI) and ubiquinol-cytochrome c oxidoreductase (cytochrome b-c1 complex, complex III, CIII), resulting in different assemblies (supercomplex SCI(1)III(2)IV(1) and megacomplex MCI(2)III(2)IV(2)). Found in a complex with TMEM177, COA6, COX18, COX20, SCO1 and SCO2. Interacts with TMEM177 in a COX20-dependent manner. Interacts with COX20. Interacts with COX16. Cu cation serves as cofactor.

It localises to the mitochondrion inner membrane. The enzyme catalyses 4 Fe(II)-[cytochrome c] + O2 + 8 H(+)(in) = 4 Fe(III)-[cytochrome c] + 2 H2O + 4 H(+)(out). Component of the cytochrome c oxidase, the last enzyme in the mitochondrial electron transport chain which drives oxidative phosphorylation. The respiratory chain contains 3 multisubunit complexes succinate dehydrogenase (complex II, CII), ubiquinol-cytochrome c oxidoreductase (cytochrome b-c1 complex, complex III, CIII) and cytochrome c oxidase (complex IV, CIV), that cooperate to transfer electrons derived from NADH and succinate to molecular oxygen, creating an electrochemical gradient over the inner membrane that drives transmembrane transport and the ATP synthase. Cytochrome c oxidase is the component of the respiratory chain that catalyzes the reduction of oxygen to water. Electrons originating from reduced cytochrome c in the intermembrane space (IMS) are transferred via the dinuclear copper A center (CU(A)) of subunit 2 and heme A of subunit 1 to the active site in subunit 1, a binuclear center (BNC) formed by heme A3 and copper B (CU(B)). The BNC reduces molecular oxygen to 2 water molecules using 4 electrons from cytochrome c in the IMS and 4 protons from the mitochondrial matrix. The chain is Cytochrome c oxidase subunit 2 (MT-CO2) from Lycalopex vetulus (Hoary fox).